Here is a 624-residue protein sequence, read N- to C-terminus: Kelch-like ECH-associated protein 1 (624 aa).

Cys38 carries the S-(2-succinyl)cysteine modification. A BTB domain is found at 77-149 (CDVTLQVKYQ…AYTASISMGE (73 aa)). An N5-[4-(S-L-cysteinyl)-5-methyl-1H-imidazol-2-yl]-L-ornithine (Arg-Cys) (interchain with C-151 in KEAP1) cross-link involves residue Arg135. S-(2-succinyl)cysteine is present on residues Cys151 and Cys241. Cys151 is modified (S-(2,3-dicarboxypropyl)cysteine; alternate). Position 151 is an S-nitrosocysteine; alternate (Cys151). Cys151 participates in a covalent cross-link: N5-[4-(S-L-cysteinyl)-5-methyl-1H-imidazol-2-yl]-L-ornithine (Cys-Arg) (interchain with R-135 in KEAP1). One can recognise a BACK domain in the interval 184–286 (AIGIANFAEQ…TPNFLQMQLQ (103 aa)). An S-(2,3-dicarboxypropyl)cysteine mark is found at Cys257 and Cys273. S-(2-succinyl)cysteine is present on residues Cys288 and Cys319. Cys288 carries the post-translational modification S-(2,3-dicarboxypropyl)cysteine; alternate. Kelch repeat units lie at residues 327-372 (LIYT…VVGG), 373-423 (LLYA…VIDG), 424-470 (HIYA…VLNR), 471-517 (LLYA…VLHN), 518-564 (CIYA…VHQG), and 565-611 (RIYV…VTME). Position 434 is an S-cGMP-cysteine (Cys434). An S-(2-succinyl)cysteine modification is found at Cys613.

This sequence belongs to the KEAP1 family. As to quaternary structure, component of the BCR(KEAP1) E3 ubiquitin ligase complex, at least composed of 2 molecules of CUL3, 2 molecules of KEAP1, and RBX1. Interacts with NFE2L2/NRF2; the interaction is direct. Forms a ternary complex with NFE2L2/NRF2 and PGAM5. Interacts with (phosphorylated) SQSTM1/p62; the interaction is direct and inactivates the BCR(KEAP1) complex by sequestering it in inclusion bodies, promoting its degradation. Interacts with NFE2L1. Interacts with BPTF and PTMA. Interacts with MAP1LC3B. Interacts indirectly with ENC1. Interacts with SESN1 and SESN2. Interacts with HSP90AA1 and HSP90AB1. Interacts with PGCKA1; this interaction prevents the ubiquitination of KEAP1 by TRIM25, thus protecting KEAP1 from degradation. In terms of processing, non-enzymatic covalent modifications of reactive cysteines by electrophile metabolites inactivate the BCR(KEAP1) complex. Accumulation of fumarate promotes the formation of cysteine S-succination (S-(2-succinyl)cysteine), leading to inactivate the BCR(KEAP1) complex and promote NFE2L2/NRF2 nuclear accumulation and activation. Nitric oxide-dependent 8-Nitro-cGMP formation promotes cysteine guanylation (S-cGMP-cysteine), leading to NFE2L2/NRF2 nuclear accumulation and activation. Itaconate, an anti-inflammatory metabolite generated in response to lipopolysaccharide, alkylates cysteines, activating NFE2L2/NRF2. Methylglyoxal, a reactive metabolite that accumulates when the glycolytic enzyme PGK1 is inhibited, promotes formation of a methylimidazole cross-link between proximal Cys-151 and Arg-135 on another KEAP1 molecule, resulting in an inactive dimer that inactivates the BCR(KEAP1) complex. Degraded via a proteasomal-independent process during selective autophagy: interaction with phosphorylated SQSTM1/p62 sequesters KEAP1 in inclusion bodies, leading to its degradation. Post-translationally, auto-ubiquitinated by the BCR(KEAP1) complex. Quinone-induced oxidative stress, but not sulforaphane, increases its ubiquitination. Ubiquitination and subsequent degradation is most pronounced following prolonged exposure of cells to oxidative stress, particularly in glutathione-deficient cells that are highly susceptible to oxidative stress. Deubiquitinated by USP25; leading to stabilization. Ubiquitinated by TRIM25; leading to degradation upon ER stress.

It is found in the cytoplasm. It localises to the nucleus. It participates in protein modification; protein ubiquitination. With respect to regulation, ubiquitin ligase activity of the BCR(KEAP1) complex is inhibited by oxidative stress and electrophile metabolites such as sulforaphane. Electrophile metabolites react with reactive cysteine residues in KEAP1 and trigger non-enzymatic covalent modifications of these cysteine residues, leading to inactivate the ubiquitin ligase activity of the BCR(KEAP1) complex. Selective autophagy also inactivates the BCR(KEAP1) complex via interaction between KEAP1 and SQSTM1/p62, which sequesters the complex in inclusion bodies and promotes its degradation. Substrate-specific adapter of a BCR (BTB-CUL3-RBX1) E3 ubiquitin ligase complex that regulates the response to oxidative stress by targeting NFE2L2/NRF2 for ubiquitination. KEAP1 acts as a key sensor of oxidative and electrophilic stress: in normal conditions, the BCR(KEAP1) complex mediates ubiquitination and degradation of NFE2L2/NRF2, a transcription factor regulating expression of many cytoprotective genes. In response to oxidative stress, different electrophile metabolites trigger non-enzymatic covalent modifications of highly reactive cysteine residues in KEAP1, leading to inactivate the ubiquitin ligase activity of the BCR(KEAP1) complex, promoting NFE2L2/NRF2 nuclear accumulation and expression of phase II detoxifying enzymes. In response to selective autophagy, KEAP1 is sequestered in inclusion bodies following its interaction with SQSTM1/p62, leading to inactivation of the BCR(KEAP1) complex and activation of NFE2L2/NRF2. The BCR(KEAP1) complex also mediates ubiquitination of SQSTM1/p62, increasing SQSTM1/p62 sequestering activity and degradation. The BCR(KEAP1) complex also targets BPTF and PGAM5 for ubiquitination and degradation by the proteasome. The protein is Kelch-like ECH-associated protein 1 of Pongo abelii (Sumatran orangutan).